A 257-amino-acid polypeptide reads, in one-letter code: UPF0246 protein Shewmr4_2963 (257 aa).

The protein belongs to the UPF0246 family.

This is UPF0246 protein Shewmr4_2963 from Shewanella sp. (strain MR-4).